Reading from the N-terminus, the 362-residue chain is Tyrosine recombinase XerH (362 aa).

The Core-binding (CB) domain maps to 43 to 140 (ECLNELNQAC…ALLGLFSYID (98 aa)). In terms of domain architecture, Tyr recombinase spans 170 to 357 (KLPTHLNNEE…DKQRLEEAAS (188 aa)). Residues Arg213, Lys239, His309, Arg312, and His335 contribute to the active site. The active-site O-(3'-phospho-DNA)-tyrosine intermediate is the Tyr344.

The protein belongs to the 'phage' integrase family. XerH subfamily.

The protein localises to the cytoplasm. With respect to regulation, ftsK is required for recombination. In terms of biological role, site-specific tyrosine recombinase, which acts by catalyzing the cutting and rejoining of the recombining DNA molecules. Involved in chromosome segregation. May contribute to chromosome decatenation. The chain is Tyrosine recombinase XerH from Helicobacter pylori (strain ATCC 700392 / 26695) (Campylobacter pylori).